A 384-amino-acid polypeptide reads, in one-letter code: Helix-loop-helix protein delilah (384 aa).

Disordered stretches follow at residues 1–101 and 187–227; these read MKSN…TANA and EEAE…KIVP. The segment covering 75 to 86 has biased composition (basic residues); that stretch reads KSRKNAPTKSKT. The region spanning 94–153 is the bHLH domain; it reads YRRKTANARERTRMREINTAFETLRHCVPEAIKGEDAANTNEKLTKITTLRLAMKYITML. The span at 209 to 224 shows a compositional bias: low complexity; it reads KKSSAASKRQSQKQAK.

Efficient DNA binding requires dimerization with another bHLH protein, possibly with da. Expressed almost exclusively in the attachments sites of the somatic muscles to tendon cells in the epidermis.

Its subcellular location is the nucleus. Its function is as follows. Probably plays an important role in the differentiation of epidermal cells into the tendon cells that form the attachment sites for all muscles. In Drosophila melanogaster (Fruit fly), this protein is Helix-loop-helix protein delilah (tx).